We begin with the raw amino-acid sequence, 206 residues long: Small ribosomal subunit protein uS4 (206 aa).

The S4 RNA-binding domain occupies 96–158; it reads GRLDNVVYRM…AKQQSRIKAA (63 aa).

The protein belongs to the universal ribosomal protein uS4 family. Part of the 30S ribosomal subunit. Contacts protein S5. The interaction surface between S4 and S5 is involved in control of translational fidelity.

In terms of biological role, one of the primary rRNA binding proteins, it binds directly to 16S rRNA where it nucleates assembly of the body of the 30S subunit. Its function is as follows. With S5 and S12 plays an important role in translational accuracy. This Vibrio atlanticus (strain LGP32) (Vibrio splendidus (strain Mel32)) protein is Small ribosomal subunit protein uS4.